The sequence spans 725 residues: ATP-dependent rRNA helicase SPB4 (725 aa).

Positions 15-43 match the Q motif motif; sequence WAKLNPPLSPWILDVINSMGFKNMTPVQA. The region spanning 46-260 is the Helicase ATP-binding domain; the sequence is IPRAVKNQDC…GLGLRNPVRI (215 aa). 59–66 provides a ligand contact to ATP; it reads AVTGSGKT. A disordered region spans residues 119 to 156; the sequence is ESEEETGDVEAHAPPFASSSRSPSPQTPDKPLFPLPML. Over residues 132–142 the composition is skewed to low complexity; sequence PPFASSSRSPS. Positions 143–152 are enriched in pro residues; sequence PQTPDKPLFP. The DEAD box signature appears at 207–210; the sequence is DEAD. One can recognise a Helicase C-terminal domain in the interval 295–458; the sequence is KTLQLIRLLL…YINAYLEEVD (164 aa). Residues 591-725 form a disordered region; the sequence is AQRADNQSSN…IGGGMFDDLE (135 aa). 2 stretches are compositionally biased toward basic and acidic residues: residues 603 to 646 and 685 to 707; these read ARAE…KYEW and EIGK…KESS. The span at 709–725 shows a compositional bias: gly residues; sequence GGAGGGGIGGGMFDDLE.

The protein belongs to the DEAD box helicase family. DDX55/SPB4 subfamily. Component of pre-60S ribosomal complexes.

Its subcellular location is the nucleus. It localises to the nucleolus. The enzyme catalyses ATP + H2O = ADP + phosphate + H(+). Functionally, ATP-binding RNA helicase involved in the biogenesis of 60S ribosomal subunits. Binds 90S pre-ribosomal particles and dissociates from pre-60S ribosomal particles after processing of 27SB pre-rRNA. Required for the normal formation of 18S rRNA through the processing of pre-rRNAs at sites A0, A1 and A2, and the normal formation of 25S and 5.8S rRNAs through the processing of pre-rRNAs at sites C1 and C2. The polypeptide is ATP-dependent rRNA helicase SPB4 (Cryptococcus neoformans var. neoformans serotype D (strain JEC21 / ATCC MYA-565) (Filobasidiella neoformans)).